The following is a 685-amino-acid chain: ATP-dependent zinc metalloprotease FTSH 8, chloroplastic (685 aa).

The transit peptide at 1–37 (MAASSACLLGNGLSVYTTKQRFQKLGLDRTSKVTVVK) directs the protein to the chloroplast. The N-terminal 36 residues, 38–73 (ASLDEKKHEGRRGFFKLLLGNAAAGVGLLASGNANA), are a transit peptide targeting the thylakoid. At 38–161 (ASLDEKKHEG…HNAQEDQGSP (124 aa)) the chain is on the lumenal, thylakoid side. A helical transmembrane segment spans residues 162–182 (ILNLIGNLAFPVILIGGLFLL). Topologically, residues 183 to 685 (SRRSSGGMGG…STSTPTPASV (503 aa)) are stromal. Residue 260–267 (GPPGTGKT) coordinates ATP. Zn(2+) is bound at residue H481. E482 is a catalytic residue. 2 residues coordinate Zn(2+): H485 and D559.

In the N-terminal section; belongs to the AAA ATPase family. It in the C-terminal section; belongs to the peptidase M41 family. In terms of assembly, heterohexamers with FTSH1, FTSH2 and FTSH5. May also form homooligomers. The cofactor is Zn(2+). In terms of tissue distribution, expressed in cotyledons, cauline and rosette leaves, stems, sepals, flovers and siliques. Very low in roots.

The protein resides in the plastid. Its subcellular location is the chloroplast thylakoid membrane. In terms of biological role, part of a complex that function as an ATP-dependent zinc metallopeptidase. Involved in the thylakoid formation and in the removal of damaged D1 in the photosystem II, preventing cell death under high-intensity light conditions. The polypeptide is ATP-dependent zinc metalloprotease FTSH 8, chloroplastic (FTSH8) (Arabidopsis thaliana (Mouse-ear cress)).